A 475-amino-acid chain; its full sequence is Cytosolic non-specific dipeptidase (475 aa).

N-acetylalanine is present on alanine 2. Residue lysine 9 is modified to N6-acetyllysine. Residue serine 58 is modified to Phosphoserine. Histidine 99 contributes to the Mn(2+) binding site. Aspartate 101 is a catalytic residue. Aspartate 132 contributes to the Mn(2+) binding site. Glutamate 166 acts as the Proton acceptor in catalysis. Residues 166 to 167 (EE), aspartate 195, and histidine 228 each bind substrate. Mn(2+) is bound by residues glutamate 167 and aspartate 195. Serine 299 carries the phosphoserine modification. Residues threonine 330, arginine 343, serine 417, and histidine 445 each coordinate substrate. Histidine 445 provides a ligand contact to Mn(2+).

It belongs to the peptidase M20A family. Homodimer. The cofactor is Mn(2+).

The protein localises to the cytoplasm. It carries out the reaction Hydrolysis of dipeptides, preferentially hydrophobic dipeptides including prolyl amino acids.. The enzyme catalyses L-threonyl-L-threonine + H2O = 2 L-threonine. The catalysed reaction is L-threonyl-L-serine + H2O = L-threonine + L-serine. It catalyses the reaction L-seryl-L-threonine + H2O = L-threonine + L-serine. It carries out the reaction L-cysteinylglycine + H2O = L-cysteine + glycine. The enzyme catalyses (S)-lactate + L-phenylalanine = N-[(S)-lactoyl]-L-phenylalanine + H2O. Functionally, catalyzes the peptide bond hydrolysis in dipeptides, displaying a non-redundant activity toward threonyl dipeptides. Mediates threonyl dipeptide catabolism in a tissue-specific way. Has high dipeptidase activity toward cysteinylglycine, an intermediate metabolite in glutathione metabolism. Metabolizes N-lactoyl-amino acids, both through hydrolysis to form lactic acid and amino acids, as well as through their formation by reverse proteolysis. Plays a role in the regulation of cell cycle arrest and apoptosis. This chain is Cytosolic non-specific dipeptidase (CNDP2), found in Pongo abelii (Sumatran orangutan).